The primary structure comprises 113 residues: Protein RALF-like 31 (113 aa).

An N-terminal signal peptide occupies residues 1–21; it reads MFNSTALVIFAILFLLISADA. The propeptide at 22 to 58 is removed in mature form; it reads FPIPSPNGEIDAMLIRNSIIGEDEDLMPTEISRRVLM. 2 cysteine pairs are disulfide-bonded: Cys-76-Cys-86 and Cys-98-Cys-104.

It belongs to the plant rapid alkalinization factor (RALF) family. Post-translationally, proteolytically cleaved, probably by S1P, a subtilisin-like serine protease (subtilase).

It localises to the secreted. In terms of biological role, cell signaling peptide that may regulate plant stress, growth, and development. Mediates a rapid alkalinization of extracellular space by mediating a transient increase in the cytoplasmic Ca(2+) concentration leading to a calcium-dependent signaling events through a cell surface receptor and a concomitant activation of some intracellular mitogen-activated protein kinases. The chain is Protein RALF-like 31 (RALFL31) from Arabidopsis thaliana (Mouse-ear cress).